Consider the following 1205-residue polypeptide: MYLKSLTLKGFKSFAAPTTLRFEPGITAVVGPNGSGKSNVVDALAWVMGEQGAKTLRGGKMEDVIFAGTSSRAPLGRAEVTVSIDNSDNALPIEYTEVSITRRMFRDGASEYEINGSSCRLMDVQELLSDSGIGREMHVIVGQGKLEEILQSRPEDRRAFIEEAAGVLKHRKRKEKALRKLDTMAANLARLTDLTTELRRQLKPLGRQAEAAQRAAAIQADLRDARLRLAADDLVSRRAEREAVFQAEAAMRREHDEAAARLAVASEELAAHESAVAELSTRAESIQHTWFGLSALAERVDATVRIASERAHHLDIEPVAVSDTDPRKPEELEAEAQQVAVAEQQLLAELDAARARLDAARAELADRERRAAEADRAHLAAVREEADRREGLARLAGQVETMRARVESIDESVARLSERIEDAAMRAQQTRAEFETVQGRIGELDQGEVGLDEHHERTVAALRLADERVAELQSAERAAERQVASLRARIDALAVGLQRKDGAAWLAHNRSGAGLFGSIAQLVKVRSGYEAALAAALGPAADALAVDGLTAAGSAVSALKQADGGRAVLVLSDWPAPQAPQSASGEMLPSGAQWALDLVESPPQLVGAMIAMLSGVAVVNDLTEAMGLVEIRPELRAVTVDGDLVGAGWVSGGSDRKLSTLEVTSEIDKARSELAAAEALAAQLNAALAGALTEQSARQDAAEQALAALNESDTAISAMYEQLGRLGQEARAAEEEWNRLLQQRTEQEAVRTQTLDDVIQLETQLRKAQETQRVQVAQPIDRQAISAAADRARGVEVEARLAVRTAEERANAVRGRADSLRRAAAAEREARVRAQQARAARLHAAAVAAAVADCGRLLAGRLHRAVDGASQLRDASAAQRQQRLAAMAAVRDEVNTLSARVGELTDSLHRDELANAQAALRIEQLEQMVLEQFGMAPADLITEYGPHVALPPTELEMAEFEQARERGEQVIAPAPMPFDRVTQERRAKRAERALAELGRVNPLALEEFAALEERYNFLSTQLEDVKAARKDLLGVVADVDARILQVFNDAFVDVEREFRGVFTALFPGGEGRLRLTEPDDMLTTGIEVEARPPGKKITRLSLLSGGEKALTAVAMLVAIFRARPSPFYIMDEVEAALDDVNLRRLLSLFEQLREQSQIIIITHQKPTMEVADALYGVTMQNDGITAVISQRMRGQQVDQLVTNSS.

32-39 (PNGSGKSN) provides a ligand contact to ATP. Coiled-coil stretches lie at residues 169-288 (KHRK…SIQH) and 330-499 (EELE…GLQR). The region spanning 514–628 (GLFGSIAQLV…VNDLTEAMGL (115 aa)) is the SMC hinge domain. 3 coiled-coil regions span residues 661 to 771 (LEVT…AQET), 802 to 836 (AVRT…RAQQ), and 979 to 1033 (DRVT…KDLL).

Belongs to the SMC family. In terms of assembly, homodimer.

It is found in the cytoplasm. In terms of biological role, required for chromosome condensation and partitioning. In Mycobacterium tuberculosis (strain ATCC 25618 / H37Rv), this protein is Chromosome partition protein Smc.